A 176-amino-acid chain; its full sequence is Crossover junction endodeoxyribonuclease RuvC (176 aa).

Active-site residues include aspartate 12, glutamate 72, and aspartate 144. Residues aspartate 12, glutamate 72, and aspartate 144 each contribute to the Mg(2+) site.

This sequence belongs to the RuvC family. Homodimer which binds Holliday junction (HJ) DNA. The HJ becomes 2-fold symmetrical on binding to RuvC with unstacked arms; it has a different conformation from HJ DNA in complex with RuvA. In the full resolvosome a probable DNA-RuvA(4)-RuvB(12)-RuvC(2) complex forms which resolves the HJ. Mg(2+) serves as cofactor.

It is found in the cytoplasm. It carries out the reaction Endonucleolytic cleavage at a junction such as a reciprocal single-stranded crossover between two homologous DNA duplexes (Holliday junction).. Its function is as follows. The RuvA-RuvB-RuvC complex processes Holliday junction (HJ) DNA during genetic recombination and DNA repair. Endonuclease that resolves HJ intermediates. Cleaves cruciform DNA by making single-stranded nicks across the HJ at symmetrical positions within the homologous arms, yielding a 5'-phosphate and a 3'-hydroxyl group; requires a central core of homology in the junction. The consensus cleavage sequence is 5'-(A/T)TT(C/G)-3'. Cleavage occurs on the 3'-side of the TT dinucleotide at the point of strand exchange. HJ branch migration catalyzed by RuvA-RuvB allows RuvC to scan DNA until it finds its consensus sequence, where it cleaves and resolves the cruciform DNA. This is Crossover junction endodeoxyribonuclease RuvC from Methylocella silvestris (strain DSM 15510 / CIP 108128 / LMG 27833 / NCIMB 13906 / BL2).